Here is a 494-residue protein sequence, read N- to C-terminus: DNA-directed DNA/RNA polymerase mu (494 aa).

Positions 1 to 24 are disordered; it reads MLPKRRRARVGSPSGDAASSTPPS. At S12 the chain carries Phosphoserine. Residues 22 to 122 form the BRCT domain; it reads PPSTRFPGVA…QPVPVECRHR (101 aa). An involved in ssDNA binding region spans residues 323–332; that stretch reads RGKLQGHDVD. Residues D330, D332, and D418 each contribute to the Mg(2+) site.

The protein belongs to the DNA polymerase type-X family. The cofactor is Mg(2+). As to expression, expressed in a number of tissues. Abundant in thymus.

It localises to the nucleus. It catalyses the reaction DNA(n) + a 2'-deoxyribonucleoside 5'-triphosphate = DNA(n+1) + diphosphate. Gap-filling polymerase involved in repair of DNA double-strand breaks by non-homologous end joining (NHEJ). Participates in immunoglobulin (Ig) light chain gene rearrangement in V(D)J recombination. This chain is DNA-directed DNA/RNA polymerase mu (POLM), found in Homo sapiens (Human).